We begin with the raw amino-acid sequence, 376 residues long: Glutamate 5-kinase (376 aa).

Residue Lys15 coordinates ATP. Positions 56, 143, and 155 each coordinate substrate. 175–176 (SD) is a binding site for ATP. The 78-residue stretch at 281-358 (KGTLTIDAGA…PDVMMILGIT (78 aa)) folds into the PUA domain.

Belongs to the glutamate 5-kinase family.

Its subcellular location is the cytoplasm. It catalyses the reaction L-glutamate + ATP = L-glutamyl 5-phosphate + ADP. Its pathway is amino-acid biosynthesis; L-proline biosynthesis; L-glutamate 5-semialdehyde from L-glutamate: step 1/2. Functionally, catalyzes the transfer of a phosphate group to glutamate to form L-glutamate 5-phosphate. The sequence is that of Glutamate 5-kinase from Rhodopseudomonas palustris (strain ATCC BAA-98 / CGA009).